The chain runs to 219 residues: Transmembrane protein 125 (219 aa).

Transmembrane regions (helical) follow at residues 36–56 (LCFVVAVGLVAGCGAGGVALL), 68–88 (LATGTVLCLLALLVLVKQLMS), 114–134 (ALVVLLSGLVLLVTGLTLAGL), and 147–167 (MLSVGIALAALGSLLLLGLLL).

The protein resides in the membrane. This Homo sapiens (Human) protein is Transmembrane protein 125 (TMEM125).